We begin with the raw amino-acid sequence, 471 residues long: Glutamate--tRNA ligase (471 aa).

The short motif at 9 to 19 is the 'HIGH' region element; that stretch reads PSPTGYLHVGG. 4 residues coordinate Zn(2+): cysteine 98, cysteine 100, cysteine 125, and histidine 127. Positions 237-241 match the 'KMSKS' region motif; sequence KLSKR. Lysine 240 contributes to the ATP binding site.

This sequence belongs to the class-I aminoacyl-tRNA synthetase family. Glutamate--tRNA ligase type 1 subfamily. Monomer. The cofactor is Zn(2+).

The protein resides in the cytoplasm. It catalyses the reaction tRNA(Glu) + L-glutamate + ATP = L-glutamyl-tRNA(Glu) + AMP + diphosphate. Functionally, catalyzes the attachment of glutamate to tRNA(Glu) in a two-step reaction: glutamate is first activated by ATP to form Glu-AMP and then transferred to the acceptor end of tRNA(Glu). This is Glutamate--tRNA ligase from Escherichia coli O6:K15:H31 (strain 536 / UPEC).